The chain runs to 417 residues: NADH-quinone oxidoreductase subunit F (417 aa).

54–63 (GRGGAGFSTG) is an NAD(+) binding site. 166–213 (GAGAYICGEETALLESLEGKKGMPRLKPPFPAGFGLYGCPTTINNVES) is an FMN binding site. Residues Cys-345, Cys-348, Cys-351, and Cys-391 each coordinate [4Fe-4S] cluster.

Belongs to the complex I 51 kDa subunit family. Requires FMN as cofactor. It depends on [4Fe-4S] cluster as a cofactor.

The enzyme catalyses a quinone + NADH + 5 H(+)(in) = a quinol + NAD(+) + 4 H(+)(out). In terms of biological role, NDH-1 shuttles electrons from NADH, via FMN and iron-sulfur (Fe-S) centers, to quinones in the respiratory chain. Couples the redox reaction to proton translocation (for every two electrons transferred, four hydrogen ions are translocated across the cytoplasmic membrane), and thus conserves the redox energy in a proton gradient. The protein is NADH-quinone oxidoreductase subunit F (nuoF) of Rickettsia bellii (strain OSU 85-389).